The primary structure comprises 105 residues: UPF0473 protein SAG2089 (105 aa).

The protein belongs to the UPF0473 family.

In Streptococcus agalactiae serotype V (strain ATCC BAA-611 / 2603 V/R), this protein is UPF0473 protein SAG2089.